We begin with the raw amino-acid sequence, 597 residues long: Elongation factor 4 (597 aa).

The tr-type G domain maps to 2–184 (QNIRNFSIIA…DIVKKIPAPE (183 aa)). Residues 14 to 19 (DHGKST) and 131 to 134 (NKID) each bind GTP.

It belongs to the TRAFAC class translation factor GTPase superfamily. Classic translation factor GTPase family. LepA subfamily.

Its subcellular location is the cell inner membrane. It catalyses the reaction GTP + H2O = GDP + phosphate + H(+). Functionally, required for accurate and efficient protein synthesis under certain stress conditions. May act as a fidelity factor of the translation reaction, by catalyzing a one-codon backward translocation of tRNAs on improperly translocated ribosomes. Back-translocation proceeds from a post-translocation (POST) complex to a pre-translocation (PRE) complex, thus giving elongation factor G a second chance to translocate the tRNAs correctly. Binds to ribosomes in a GTP-dependent manner. In Haemophilus ducreyi (strain 35000HP / ATCC 700724), this protein is Elongation factor 4.